The chain runs to 33 residues: NAD-reducing hydrogenase HoxS subunit gamma (33 aa).

The 33-residue stretch at 1 to 33 (SIEIEIDGVTVTTEESRTLVDVAAEAGVYIPTL) folds into the 2Fe-2S ferredoxin-type domain.

Belongs to the complex I 75 kDa subunit family. In terms of assembly, tetramer of an alpha and a gamma subunits (flavin-containing dimer), and a delta and a nickel-containing beta subunits (hydrogenase dimer). The cofactor is [4Fe-4S] cluster.

The protein resides in the cytoplasm. It carries out the reaction H2 + NAD(+) = NADH + H(+). Its function is as follows. Subunits alpha and gamma of HoxS constitute an NADH--oxidoreductase. This is NAD-reducing hydrogenase HoxS subunit gamma (hoxU) from Rhodococcus opacus (Nocardia opaca).